We begin with the raw amino-acid sequence, 124 residues long: uncharacterized protein (124 aa).

Disordered stretches follow at residues 1–26 (MRRQ…QPRP) and 100–124 (IPGQ…GLRR). The segment covering 102–115 (GQQSRNCSLPQTKY) has biased composition (polar residues).

The protein localises to the cytoplasm. It localises to the cytoskeleton. It is found in the cilium basal body. This is an uncharacterized protein from Rattus norvegicus (Rat).